The following is a 363-amino-acid chain: UDP-N-acetylglucosamine--N-acetylmuramyl-(pentapeptide) pyrophosphoryl-undecaprenol N-acetylglucosamine transferase (363 aa).

Residues 14-16, Asn122, Arg163, Ser190, and Gln285 each bind UDP-N-acetyl-alpha-D-glucosamine; that span reads TGG.

Belongs to the glycosyltransferase 28 family. MurG subfamily.

The protein localises to the cell inner membrane. The enzyme catalyses di-trans,octa-cis-undecaprenyl diphospho-N-acetyl-alpha-D-muramoyl-L-alanyl-D-glutamyl-meso-2,6-diaminopimeloyl-D-alanyl-D-alanine + UDP-N-acetyl-alpha-D-glucosamine = di-trans,octa-cis-undecaprenyl diphospho-[N-acetyl-alpha-D-glucosaminyl-(1-&gt;4)]-N-acetyl-alpha-D-muramoyl-L-alanyl-D-glutamyl-meso-2,6-diaminopimeloyl-D-alanyl-D-alanine + UDP + H(+). Its pathway is cell wall biogenesis; peptidoglycan biosynthesis. Functionally, cell wall formation. Catalyzes the transfer of a GlcNAc subunit on undecaprenyl-pyrophosphoryl-MurNAc-pentapeptide (lipid intermediate I) to form undecaprenyl-pyrophosphoryl-MurNAc-(pentapeptide)GlcNAc (lipid intermediate II). The sequence is that of UDP-N-acetylglucosamine--N-acetylmuramyl-(pentapeptide) pyrophosphoryl-undecaprenol N-acetylglucosamine transferase from Prochlorococcus marinus (strain MIT 9312).